Reading from the N-terminus, the 291-residue chain is Hydroxysteroid 11-beta-dehydrogenase 1-like protein B (291 aa).

The signal sequence occupies residues 1–17 (MAGVILLLLSLCVGYIA). Residues 40–66 (GSST…TARR), 91–92 (DM), and 118–120 (NHI) each bind NADP(+). Ser170 lines the substrate pocket. Catalysis depends on Tyr183, which acts as the Proton acceptor. Residues 183–187 (YCASK) and 216–222 (GYIDTEN) contribute to the NADP(+) site.

It belongs to the short-chain dehydrogenases/reductases (SDR) family.

It localises to the secreted. It catalyses the reaction cortisone + NADPH + H(+) = cortisol + NADP(+). In terms of biological role, unidirectional NADP(+)-dependent cortisol dehydrogenase (in vitro). The chain is Hydroxysteroid 11-beta-dehydrogenase 1-like protein B (hsd11b1l-b) from Xenopus laevis (African clawed frog).